Consider the following 313-residue polypeptide: CRISPR-associated endonuclease Cas1 1 (313 aa).

Residues E144, H211, and D224 each coordinate Mn(2+). Positions 288–313 are disordered; it reads PPLDAPEAVDPVIPPEEPSGDDGHRG.

Belongs to the CRISPR-associated endonuclease Cas1 family. Homodimer, forms a heterotetramer with a Cas2 homodimer. It depends on Mg(2+) as a cofactor. The cofactor is Mn(2+).

CRISPR (clustered regularly interspaced short palindromic repeat), is an adaptive immune system that provides protection against mobile genetic elements (viruses, transposable elements and conjugative plasmids). CRISPR clusters contain spacers, sequences complementary to antecedent mobile elements, and target invading nucleic acids. CRISPR clusters are transcribed and processed into CRISPR RNA (crRNA). Acts as a dsDNA endonuclease. Involved in the integration of spacer DNA into the CRISPR cassette. The chain is CRISPR-associated endonuclease Cas1 1 from Rhodospirillum rubrum (strain ATCC 11170 / ATH 1.1.1 / DSM 467 / LMG 4362 / NCIMB 8255 / S1).